We begin with the raw amino-acid sequence, 118 residues long: MSAPAQPPAEGTEGAAPGGGPPGPPPNMTSNRRLQQTQAQVEEVVDIMRVNVDKVLERDQKLSELDDRADALQAGASQFESSAAKLKRKYWWKNCKMMIMLGAICAIIVVVIVIYFFT.

Low complexity predominate over residues 1 to 15; sequence MSAPAQPPAEGTEGA. The disordered stretch occupies residues 1–36; sequence MSAPAQPPAEGTEGAAPGGGPPGPPPNMTSNRRLQQ. The Cytoplasmic portion of the chain corresponds to 1–96; that stretch reads MSAPAQPPAE…KRKYWWKNCK (96 aa). Positions 33–93 constitute a v-SNARE coiled-coil homology domain; sequence RLQQTQAQVE…AKLKRKYWWK (61 aa). Ser63 is modified (phosphoserine). A helical; Anchor for type IV membrane protein membrane pass occupies residues 97-116; sequence MMIMLGAICAIIVVVIVIYF. At 117–118 the chain is on the vesicular side; it reads FT.

It belongs to the synaptobrevin family. In terms of assembly, interacts with VAPA and VAPB. In terms of processing, (Microbial infection) Targeted and hydrolyzed by C.botulinum neurotoxin type X (BoNT/X) which hydrolyzes the 68-Arg-|-Ala-69 bond and probably inhibits neurotransmitter release. It remains unknown whether BoNT/X is ever produced, or what organisms it targets. Highly expressed in the zona incerta and rostral periolivary region of the brain. Other neuroanatomical regions show negligible expression. Expressed in the retina, expression observed in the outer segments of the photoreceptors, in the outer and inner plexiform layers, and in a subset of ganglion cells.

Its subcellular location is the cytoplasmic vesicle. It localises to the secretory vesicle. It is found in the synaptic vesicle membrane. The protein resides in the synapse. The protein localises to the synaptosome. Its subcellular location is the cytoplasmic vesicle membrane. Functionally, involved in the targeting and/or fusion of transport vesicles to their target membrane. The polypeptide is Vesicle-associated membrane protein 1 (Vamp1) (Mus musculus (Mouse)).